We begin with the raw amino-acid sequence, 230 residues long: Flagellar L-ring protein (230 aa).

The N-terminal stretch at 1 to 21 (MMLKTVLRLPVCAALLALAAG) is a signal peptide. The N-palmitoyl cysteine moiety is linked to residue Cys22. Residue Cys22 is the site of S-diacylglycerol cysteine attachment. Positions 34-53 (PLTAPPPPPPQPSARPNGSI) are disordered. A compositionally biased stretch (pro residues) spans 36–46 (TAPPPPPPQPS).

The protein belongs to the FlgH family. The basal body constitutes a major portion of the flagellar organelle and consists of four rings (L,P,S, and M) mounted on a central rod.

It is found in the cell outer membrane. Its subcellular location is the bacterial flagellum basal body. Its function is as follows. Assembles around the rod to form the L-ring and probably protects the motor/basal body from shearing forces during rotation. This is Flagellar L-ring protein from Bordetella bronchiseptica (strain ATCC BAA-588 / NCTC 13252 / RB50) (Alcaligenes bronchisepticus).